The following is a 200-amino-acid chain: DNA-binding protein HupB (200 aa).

The segment at Met-1–Ala-90 is bacterial histone-like domain. 7 positions are modified to N6-acetyllysine: Lys-3, Lys-72, Lys-86, Lys-103, Lys-137, Lys-144, and Lys-156. The tract at residues Ala-101–Lys-200 is degenerate repeats region. A disordered region spans residues Ala-179–Lys-200.

Belongs to the bacterial histone-like protein family. Long actinobacterial subfamily. In terms of assembly, binds to human laminin-2. In terms of processing, may also be methylated and possibly phosphorylated in vivo.

The protein localises to the cytoplasm. It localises to the nucleoid. Its subcellular location is the secreted. The protein resides in the cell wall. It is found in the cell surface. The catalysed reaction is 4 Fe(2+) + O2 + 4 H(+) = 4 Fe(3+) + 2 H2O. Functionally, a nucleoid-associated protein (NAP) that plays a role in local chromosome architecture and chromosome compactation. Required for biofilm formation, stress survival and possibly in cell wall assembly, probably influences transcription. RNase E and HupB jointly contribute to cellular adaptation to changing growth conditions and survival during antibiotic treatment and in the host. Its function is as follows. Binds Fe(3+) but not Fe(2+). Has ferroxidase activity, converts Fe(2+) into Fe(3+) and in the presence of H(2)O(2) prevents the generation of hydroxyl radicals (the Fenton reaction). Protects DNA from damage in the presence of FeSO(4) and H(2)O(2). May function in iron storage. May be involved in entry into human Schwann cells. The protein is DNA-binding protein HupB of Mycobacterium leprae (strain TN).